Reading from the N-terminus, the 1142-residue chain is ABC transporter F family member 4 (1142 aa).

Positions 1–564 (MGPKGKKKGQ…EDAFELAKKK (564 aa)) are disordered. Low complexity-rich tracts occupy residues 121–143 (PQPV…QQQQ), 153–166 (PQPV…APQK), and 182–195 (PQPV…APQK). Acidic residues-rich tracts occupy residues 203 to 212 (SEDEDEEDEV) and 233 to 244 (EEEEEEEEEEIE). Basic residues-rich tracts occupy residues 249 to 261 (KGGK…KGGK) and 280 to 290 (KGGKKDKKKGS). Acidic residues predominate over residues 295-306 (EEEEEEEEEEIE). A compositionally biased stretch (basic and acidic residues) spans 314–328 (NKKDQKKGGKGKHVE). Over residues 329–340 (EEEEEEEEEEIE) the composition is skewed to acidic residues. The segment covering 377–387 (KGGKKDKKKGS) has biased composition (basic residues). Acidic residues-rich tracts occupy residues 392–404 (EEEE…EEIE) and 441–451 (EEEEQEQEEEE). The segment covering 456-467 (SKSNKKDKKKGK) has biased composition (basic residues). Positions 471-480 (EEEEEEEEEE) are enriched in acidic residues. A compositionally biased stretch (basic residues) spans 485 to 496 (SKSNKKDKKKGS). The segment covering 501 to 518 (EEEEEEEEEEEEEKEEEE) has biased composition (acidic residues). Residues 530–548 (AKKVKKVDKKEKKKEKEKK) are compositionally biased toward basic residues. 2 consecutive ABC transporter domains span residues 604–857 (IKFD…RSKE) and 923–1139 (LVFK…DNMV). ATP contacts are provided by residues 636 to 643 (GRNGIGKS) and 956 to 963 (GMNGVGKS).

It belongs to the ABC transporter superfamily.

The chain is ABC transporter F family member 4 (abcF4) from Dictyostelium discoideum (Social amoeba).